Here is a 26-residue protein sequence, read N- to C-terminus: Hemocyanin subunit B (26 aa).

It belongs to the tyrosinase family. Hemocyanin subfamily. As to expression, hemolymph.

It localises to the secreted. Its subcellular location is the extracellular space. Its function is as follows. Hemocyanins are copper-containing oxygen carriers occurring freely dissolved in the hemolymph of many mollusks and arthropods. This Carcinus maenas (Common shore crab) protein is Hemocyanin subunit B.